A 220-amino-acid polypeptide reads, in one-letter code: ATP-dependent Clp protease proteolytic subunit (220 aa).

The Nucleophile role is filled by Ser-122. His-147 is an active-site residue.

Belongs to the peptidase S14 family. In terms of assembly, fourteen ClpP subunits assemble into 2 heptameric rings which stack back to back to give a disk-like structure with a central cavity, resembling the structure of eukaryotic proteasomes.

It localises to the cytoplasm. It catalyses the reaction Hydrolysis of proteins to small peptides in the presence of ATP and magnesium. alpha-casein is the usual test substrate. In the absence of ATP, only oligopeptides shorter than five residues are hydrolyzed (such as succinyl-Leu-Tyr-|-NHMec, and Leu-Tyr-Leu-|-Tyr-Trp, in which cleavage of the -Tyr-|-Leu- and -Tyr-|-Trp bonds also occurs).. Functionally, cleaves peptides in various proteins in a process that requires ATP hydrolysis. Has a chymotrypsin-like activity. Plays a major role in the degradation of misfolded proteins. The sequence is that of ATP-dependent Clp protease proteolytic subunit from Colwellia psychrerythraea (strain 34H / ATCC BAA-681) (Vibrio psychroerythus).